We begin with the raw amino-acid sequence, 492 residues long: Cytochrome P450 2B19 (492 aa).

Serine 129 is modified (phosphoserine; by PKA). Cysteine 437 contacts heme.

It belongs to the cytochrome P450 family. Requires heme as cofactor. Expressed only in differentiated keratinocytes in skin.

It localises to the endoplasmic reticulum membrane. The protein resides in the microsome membrane. The catalysed reaction is an organic molecule + reduced [NADPH--hemoprotein reductase] + O2 = an alcohol + oxidized [NADPH--hemoprotein reductase] + H2O + H(+). Functionally, cytochromes P450 are a group of heme-thiolate monooxygenases. In liver microsomes, this enzyme is involved in an NADPH-dependent electron transport pathway. It oxidizes a variety of structurally unrelated compounds, including steroids, fatty acids, and xenobiotics. The chain is Cytochrome P450 2B19 (Cyp2b19) from Mus musculus (Mouse).